The following is a 505-amino-acid chain: Ikaros family zinc finger protein (505 aa).

C2H2-type zinc fingers lie at residues 18-40 (LTCE…KRSH), 46-68 (FQCN…VKLH), 74-96 (FKCS…IRTH), and 102-128 (YKCN…PGFH). Composition is skewed to polar residues over residues 262–273 (FLNTPSPVTRSA) and 309–327 (RFQH…SQQP). 2 disordered regions span residues 262–296 (FLNT…DIGS) and 309–440 (RFQH…VSGS). The span at 336-345 (ILGGSLGGIC) shows a compositional bias: gly residues. Residues 366–377 (ATSSPSNSCPDS) show a composition bias toward polar residues. Residues 393 to 406 (GSGSSTSRPNGSTG) show a composition bias toward low complexity. Basic and acidic residues predominate over residues 409–419 (HRPEMHQDNGR). A compositionally biased stretch (polar residues) spans 424 to 439 (SGASDSSSLPTYNVSG). 2 consecutive C2H2-type zinc fingers follow at residues 448 to 470 (YPCH…MGCH) and 476 to 500 (FECN…RGEH).

The protein belongs to the Ikaros C2H2-type zinc-finger protein family. As to quaternary structure, heterodimer and homodimer with other IKAROS family members. As to expression, expression is strongest in the blood, gills and intestine.

The protein resides in the nucleus. The chain is Ikaros family zinc finger protein from Myxine glutinosa (Atlantic hagfish).